Reading from the N-terminus, the 748-residue chain is MMKMELRLLVSLIFILCSISMLAAEENLEHDQINLMTYIVHVKKSENVASHQSEDLHSWYHSFLPQTFPHKERMVFSYRKVASGFAVKLTPEEAKSLQEKGEIVSARPERTLELHTTHTPTFLGLKQGQGLWSDDNLGKGVIIGIIDTGIFPLHPSFNDEGMPPPPAKWKGHCEFTGGQVCNNKLIGARNLVKSAIQEPPFENFFHGTHTAAEAAGRFIEDASVFGNAKGVAAGMAPNAHLAIYKVCNDKIGCTESAILAAMDIAIEDGVDVLSLSLGLGSLPFFEDPIAIGAFAATQNGVFVSCSAANSGPGYSTLSNEAPWILTVGASTIDRKIVASAKLGNGEEYEGETLFQPKDFSQQLLPLVYPGSFGYGNQTQNQSLCLPGSLKNIDLSGKVVLCDVGNVSSIVKGQEVLNSGGIAMILANSEALGFSTFAIAHVLPAVEVSYAAGLTIKSYIKSTYNPTATLIFKGTIIGDSLAPSVVYFSSRGPSQESPGILKPDIIGPGVNILAAWAVSVDNKIPAFDIVSGTSMSCPHLSGIAALIKSSHPDWSPAAIKSAIMTTANTLNLGGIPILDQRLFPADIFATGAGHVNPVKANDPGLVYDIEPEDYVPYLCGLGYSDKEIEVIVQWKVKCSNVKSIPEAQLNYPSFSILLGSDSQYYTRTLTNVGFANSTYKVELEVPLALGMSVNPSEITFTEVNEKVSFSVEFIPQIKENRRNHTFGQGSLTWVSDRHAVRIPISVIFK.

The signal sequence occupies residues 1–24; the sequence is MMKMELRLLVSLIFILCSISMLAA. An Inhibitor I9 domain is found at 37-115; the sequence is TYIVHVKKSE…ARPERTLELH (79 aa). In terms of domain architecture, Peptidase S8 spans 122–600; it reads FLGLKQGQGL…AGHVNPVKAN (479 aa). Catalysis depends on charge relay system residues Asp-147 and His-206. One can recognise a PA domain in the interval 365 to 454; sequence PLVYPGSFGY…VEVSYAAGLT (90 aa). Asn-376, Asn-380, and Asn-405 each carry an N-linked (GlcNAc...) asparagine glycan. Ser-533 acts as the Charge relay system in catalysis. Residues Asn-675 and Asn-722 are each glycosylated (N-linked (GlcNAc...) asparagine).

The protein belongs to the peptidase S8 family.

It is found in the secreted. Its subcellular location is the extracellular space. It localises to the apoplast. Functionally, required for arbuscular mycorrhiza (AM) development during AM symbiosis with AM fungi (e.g. Glomeromycota intraradices). The polypeptide is Subtilisin-like protease (Medicago truncatula (Barrel medic)).